A 198-amino-acid polypeptide reads, in one-letter code: MICOS complex subunit MIC26 (198 aa).

The signal sequence occupies residues 1–25 (MFKVIHRYVGPASLSLLTFKVYASS). A helical membrane pass occupies residues 108–128 (PGFFPRLGVIGFAGVVGLVLA). A glycan (O-linked (Xyl...) (chondroitin sulfate) serine) is linked at S162.

It belongs to the apolipoprotein O/MICOS complex subunit Mic27 family. Component of the mitochondrial contact site and cristae organizing system (MICOS) complex, composed of at least MICOS10/MIC10, CHCHD3/MIC19, CHCHD6/MIC25, APOOL/MIC27, IMMT/MIC60, APOO/MIC23/MIC26 and MICOS13/MIC13. This complex was also known under the names MINOS or MitOS complex. The MICOS complex associates with mitochondrial outer membrane proteins SAMM50, MTX1 and MTX2 (together described as components of the mitochondrial outer membrane sorting assembly machinery (SAM) complex) and DNAJC11, mitochondrial inner membrane protein TMEM11 and with HSPA9. The MICOS and SAM complexes together with DNAJC11 are part of a large protein complex spanning both membranes termed the mitochondrial intermembrane space bridging (MIB) complex. Interacts with IMMT/MIC60. Interacts with MICOS10/MIC10 and APOOL/MIC27. O-glycosylation; glycosaminoglycan of chondroitin-sulfate type.

Its subcellular location is the mitochondrion inner membrane. The protein localises to the secreted. The protein resides in the mitochondrion. It is found in the endoplasmic reticulum membrane. It localises to the golgi apparatus membrane. Its function is as follows. Component of the MICOS complex, a large protein complex of the mitochondrial inner membrane that plays crucial roles in the maintenance of crista junctions, inner membrane architecture, and formation of contact sites to the outer membrane. Plays a crucial role in crista junction formation and mitochondrial function. Can induce cardiac lipotoxicity by enhancing mitochondrial respiration and fatty acid metabolism in cardiac myoblasts. Promotes cholesterol efflux from macrophage cells. Detected in HDL, LDL and VLDL. Secreted by a microsomal triglyceride transfer protein (MTTP)-dependent mechanism, probably as a VLDL-associated protein that is subsequently transferred to HDL. This chain is MICOS complex subunit MIC26 (APOO), found in Bos taurus (Bovine).